Consider the following 260-residue polypeptide: HTH-type transcriptional repressor NanR (260 aa).

The HTH gntR-type domain maps to 27 to 95; that stretch reads KKLSEMVEEE…NGERARVSRP (69 aa). Positions 55 to 74 form a DNA-binding region, H-T-H motif; that stretch reads ERELMAFFNVGRPSVREALA.

Belongs to the NanR family.

Its function is as follows. Transcriptional repressor that controls expression of the genes required for the catabolism of sialic acids. This is HTH-type transcriptional repressor NanR from Citrobacter rodentium (strain ICC168) (Citrobacter freundii biotype 4280).